The following is a 253-amino-acid chain: UPF0174 protein jhp_1494 (253 aa).

This sequence belongs to the UPF0174 family.

This Helicobacter pylori (strain J99 / ATCC 700824) (Campylobacter pylori J99) protein is UPF0174 protein jhp_1494.